Here is a 321-residue protein sequence, read N- to C-terminus: uncharacterized protein (321 aa).

The Extracellular portion of the chain corresponds to 1–6; it reads MDIIRK. The helical transmembrane segment at 7-29 threads the bilayer; sequence ISHFAGQTFGIWVIVFAVLGFSF. Topologically, residues 30–34 are cytoplasmic; sequence PSLFT. Residues 35-57 form a helical membrane-spanning segment; it reads WISSYITIFLGIIMFGMGLTLQA. Over 58–69 the chain is Extracellular; that stretch reads DDFKELVRKPWQ. Residues 70–92 traverse the membrane as a helical segment; it reads VIIGVIAQYTIMPLVAFGLAFGL. Topologically, residues 93–97 are cytoplasmic; sequence HLPAE. Residues 98–120 form a helical membrane-spanning segment; it reads IAVGVILVGCCPGGTASNVMTFL. Residues 121 to 129 lie on the Extracellular side of the membrane; that stretch reads AKGNTALSV. A helical membrane pass occupies residues 130-150; the sequence is AVTTISTLLAPVVTPLLIMLF. Residues 151–159 are Cytoplasmic-facing; sequence AKEWLPVSP. The helical transmembrane segment at 160 to 180 threads the bilayer; the sequence is GSLFISILQAVLFPIIAGLIV. The Extracellular portion of the chain corresponds to 181 to 190; the sequence is KMFFRKQVAK. A helical transmembrane segment spans residues 191–211; that stretch reads AVHALPLVSVIGIVAIVSAVV. Topologically, residues 212 to 221 are cytoplasmic; the sequence is SGNRENLLQS. Residues 222–242 form a helical membrane-spanning segment; sequence GLLIFSVVILHNGIGYLLGFL. Over 243–267 the chain is Extracellular; the sequence is CAKLLKMDYPSQKAIAIEVGMQNSG. A helical membrane pass occupies residues 268–288; it reads LGAALATAHFSPLSAVPSAIF. Residues 289–321 lie on the Cytoplasmic side of the membrane; that stretch reads SVWHNLSGSMLATYWSKKVKKKQAGSKSSNLSL.

The protein belongs to the bile acid:sodium symporter (BASS) (TC 2.A.28) family.

Its subcellular location is the cell membrane. This is an uncharacterized protein from Bacillus subtilis (strain 168).